Consider the following 103-residue polypeptide: Cell division protein FtsB (103 aa).

Topologically, residues 1 to 3 (MGK) are cytoplasmic. Residues 4–21 (LTLLLLALLVWLQYSLWF) traverse the membrane as a helical segment. Topologically, residues 22–103 (GKNGIHDYSR…RAATAGQTHR (82 aa)) are periplasmic. Positions 33–62 (NDDVVAQQATNAKLKARNDQLFAEIDDLNG) form a coiled coil.

This sequence belongs to the FtsB family. Part of a complex composed of FtsB, FtsL and FtsQ.

The protein localises to the cell inner membrane. In terms of biological role, essential cell division protein. May link together the upstream cell division proteins, which are predominantly cytoplasmic, with the downstream cell division proteins, which are predominantly periplasmic. The polypeptide is Cell division protein FtsB (Salmonella agona (strain SL483)).